A 441-amino-acid polypeptide reads, in one-letter code: Endoglucanase E-2 (441 aa).

Residues 1 to 31 (MSPRPLRALLGAAAAALVSAAALAFPSQAAA) constitute a signal peptide (tat-type signal). The tract at residues 32–320 (NDSPFYVNPN…YEMAIAAGGT (289 aa)) is catalytic. D110 is an active-site residue. 2 cysteine pairs are disulfide-bonded: C111-C156 and C263-C298. Catalysis depends on D148, which acts as the Proton donor. The active-site Nucleophile is D296. The tract at residues 317–343 (AGGTNPNPNPNPTPTPTPTPTPPPGSS) is disordered. Residues 321 to 340 (NPNPNPNPTPTPTPTPTPPP) are linker. The segment covering 323–341 (NPNPNPTPTPTPTPTPPPG) has biased composition (pro residues). Positions 339-441 (PPGSSGACTA…SVPTLTCAAS (103 aa)) constitute a CBM2 domain. C346 and C438 are disulfide-bonded.

It belongs to the glycosyl hydrolase 6 (cellulase B) family. As to quaternary structure, homodimer. Post-translationally, predicted to be exported by the Tat system. The position of the signal peptide cleavage has been experimentally proven.

It carries out the reaction Endohydrolysis of (1-&gt;4)-beta-D-glucosidic linkages in cellulose, lichenin and cereal beta-D-glucans.. The protein operates within glycan metabolism; cellulose degradation. The chain is Endoglucanase E-2 (celB) from Thermobifida fusca (Thermomonospora fusca).